The chain runs to 293 residues: Phosphoribosylaminoimidazole-succinocarboxamide synthase (293 aa).

The protein belongs to the SAICAR synthetase family.

It carries out the reaction 5-amino-1-(5-phospho-D-ribosyl)imidazole-4-carboxylate + L-aspartate + ATP = (2S)-2-[5-amino-1-(5-phospho-beta-D-ribosyl)imidazole-4-carboxamido]succinate + ADP + phosphate + 2 H(+). Its pathway is purine metabolism; IMP biosynthesis via de novo pathway; 5-amino-1-(5-phospho-D-ribosyl)imidazole-4-carboxamide from 5-amino-1-(5-phospho-D-ribosyl)imidazole-4-carboxylate: step 1/2. In Desulfosudis oleivorans (strain DSM 6200 / JCM 39069 / Hxd3) (Desulfococcus oleovorans), this protein is Phosphoribosylaminoimidazole-succinocarboxamide synthase.